A 438-amino-acid polypeptide reads, in one-letter code: Xylose isomerase (438 aa).

Catalysis depends on residues His-100 and Asp-103. Glu-231, Glu-267, His-270, Asp-295, Asp-306, Asp-308, and Asp-338 together coordinate Mg(2+).

It belongs to the xylose isomerase family. Homotetramer. It depends on Mg(2+) as a cofactor.

It localises to the cytoplasm. The enzyme catalyses alpha-D-xylose = alpha-D-xylulofuranose. This chain is Xylose isomerase, found in Pseudomonas syringae pv. syringae (strain B728a).